We begin with the raw amino-acid sequence, 233 residues long: Charged multivesicular body protein 4c (233 aa).

Disordered regions lie at residues 1-24 (MSKLGKFFKGGGSSKSRAAPSPQE) and 173-233 (QEEL…AWAT). The segment at 1 to 153 (MSKLGKFFKG…EISEAFSQRV (153 aa)) is intramolecular interaction with C-terminus. The stretch at 125-183 (LNKIDDLMQEITEQQDIAQEISEAFSQRVGFGDDFDEDELMAELEELEQEELNKKMTNI) forms a coiled coil. The intramolecular interaction with N-terminus stretch occupies residues 154–233 (GFGDDFDEDE…DIKQLAAWAT (80 aa)). The segment covering 204-216 (SSTARRSRAASSQ) has biased composition (low complexity). A Phosphoserine; by AURKB modification is found at Ser-210.

The protein belongs to the SNF7 family. Probable core component of the endosomal sorting required for transport complex III (ESCRT-III). ESCRT-III components are thought to multimerize to form a flat lattice on the perimeter membrane of the endosome. Several assembly forms of ESCRT-III may exist that interact and act sequentially. Self-associates. Interacts with CHMP2A. Interacts with CHMP4A. Interacts with CHMP4B. Interacts with CHMP6. Interacts with VPS4A. Interacts with PDCD6IP; the interaction is direct. Phosphorylated at Ser-210 by AURKB during cytokinesis: together with ZFYVE19/ANCHR, phosphorylated CHMP4C retains abscission-competent VPS4 (VPS4A and/or VPS4B) at the midbody ring until abscission checkpoint signaling is terminated at late cytokinesis. Expressed in heart, spleen and kidney.

Its subcellular location is the cytoplasm. It localises to the cytosol. The protein localises to the late endosome membrane. The protein resides in the midbody. It is found in the midbody ring. Its function is as follows. Probable core component of the endosomal sorting required for transport complex III (ESCRT-III) which is involved in multivesicular bodies (MVBs) formation and sorting of endosomal cargo proteins into MVBs. MVBs contain intraluminal vesicles (ILVs) that are generated by invagination and scission from the limiting membrane of the endosome and mostly are delivered to lysosomes enabling degradation of membrane proteins, such as stimulated growth factor receptors, lysosomal enzymes and lipids. The MVB pathway appears to require the sequential function of ESCRT-O, -I,-II and -III complexes. ESCRT-III proteins mostly dissociate from the invaginating membrane before the ILV is released. The ESCRT machinery also functions in topologically equivalent membrane fission events, such as the terminal stages of cytokinesis and the budding of enveloped viruses (HIV-1 and other lentiviruses). Key component of the cytokinesis checkpoint, a process required to delay abscission to prevent both premature resolution of intercellular chromosome bridges and accumulation of DNA damage: upon phosphorylation by AURKB, together with ZFYVE19/ANCHR, retains abscission-competent VPS4 (VPS4A and/or VPS4B) at the midbody ring until abscission checkpoint signaling is terminated at late cytokinesis. Deactivation of AURKB results in dephosphorylation of CHMP4C followed by its dissociation from ANCHR and VPS4 and subsequent abscission. ESCRT-III proteins are believed to mediate the necessary vesicle extrusion and/or membrane fission activities, possibly in conjunction with the AAA ATPase VPS4. Involved in HIV-1 p6- and p9-dependent virus release. CHMP4A/B/C are required for the exosomal release of SDCBP, CD63 and syndecan. The sequence is that of Charged multivesicular body protein 4c (CHMP4C) from Homo sapiens (Human).